Here is a 319-residue protein sequence, read N- to C-terminus: Heavy metal-associated isoprenylated plant protein 9 (319 aa).

2 stretches are compositionally biased toward basic and acidic residues: residues 1 to 11 and 24 to 45; these read MGEEVKPEAKE and EEKK…KPKE. A disordered region spans residues 1-57; sequence MGEEVKPEAKEAASAPQAVPAEEEEKKKDVAEEKKVAAEEEKPKEEEEPQPPPPPPP. Residues 21–48 are a coiled coil; that stretch reads AEEEEKKKDVAEEKKVAAEEEKPKEEEE. HMA domains are found at residues 55 to 118 and 144 to 208; these read PPPF…KRMA and LTTV…KQAR. Residues cysteine 66, cysteine 69, cysteine 155, and cysteine 158 each coordinate a metal cation. A disordered region spans residues 207–282; sequence ARIVPQPDPE…RDNEMTAMAQ (76 aa). The segment covering 224 to 254 has biased composition (basic and acidic residues); sequence QEEKKEESGEGNEKPPETGEEKEEEKKKEGE. Residues 255-268 show a composition bias toward acidic residues; it reads ENGEEGGGEEAAAT. Cysteine 316 carries the post-translational modification Cysteine methyl ester. Cysteine 316 is lipidated: S-farnesyl cysteine. Residues 317-319 constitute a propeptide, removed in mature form; the sequence is CIS.

This sequence belongs to the HIPP family.

Its function is as follows. Heavy-metal-binding protein. The polypeptide is Heavy metal-associated isoprenylated plant protein 9 (Arabidopsis thaliana (Mouse-ear cress)).